The primary structure comprises 469 residues: Cytoplasmic tRNA 2-thiolation protein 2 (469 aa).

The protein belongs to the CTU2/NCS2 family.

The protein resides in the cytoplasm. Its pathway is tRNA modification; 5-methoxycarbonylmethyl-2-thiouridine-tRNA biosynthesis. Plays a central role in 2-thiolation of mcm(5)S(2)U at tRNA wobble positions of tRNA(Lys), tRNA(Glu) and tRNA(Gln). May act by forming a heterodimer with NCS6 that ligates sulfur from thiocarboxylated URM1 onto the uridine of tRNAs at wobble position. Prior mcm(5) tRNA modification by the elongator complex is required for 2-thiolation. May also be involved in protein urmylation. The sequence is that of Cytoplasmic tRNA 2-thiolation protein 2 from Candida glabrata (strain ATCC 2001 / BCRC 20586 / JCM 3761 / NBRC 0622 / NRRL Y-65 / CBS 138) (Yeast).